A 144-amino-acid polypeptide reads, in one-letter code: C-C motif chemokine 25 (144 aa).

An N-terminal signal peptide occupies residues 1 to 23 (MKLWLFACLVACFVGAWMPVVHA). 2 disulfides stabilise this stretch: cysteine 30–cysteine 58 and cysteine 31–cysteine 73. A disordered region spans residues 98 to 144 (KSASDSQTERKKSNHMKSKVENPNSTSVRSATLGHPRMVMMPRKTNN). The segment covering 118 to 127 (ENPNSTSVRS) has biased composition (polar residues).

Belongs to the intercrine beta (chemokine CC) family. Specifically expressed by thymic dendritic cells. High levels in thymus and small intestine.

Its subcellular location is the secreted. Functionally, potentially involved in T-cell development. Recombinant protein shows chemotactic activity on thymocytes, macrophages, THP-1 cells, and dendritics cells but is inactive on peripheral blood lymphocytes and neutrophils. Binds to CCR9. Binds to atypical chemokine receptor ACKR4 and mediates the recruitment of beta-arrestin (ARRB1/2) to ACKR4. The chain is C-C motif chemokine 25 (Ccl25) from Mus musculus (Mouse).